The following is a 378-amino-acid chain: Glutamate 5-kinase (378 aa).

Residue K14 participates in ATP binding. Positions 54, 141, and 153 each coordinate substrate. 173 to 174 (SD) is an ATP binding site. The 78-residue stretch at 279 to 356 (AGRLTVDAGA…DEISEILGYD (78 aa)) folds into the PUA domain.

Belongs to the glutamate 5-kinase family.

It localises to the cytoplasm. It catalyses the reaction L-glutamate + ATP = L-glutamyl 5-phosphate + ADP. The protein operates within amino-acid biosynthesis; L-proline biosynthesis; L-glutamate 5-semialdehyde from L-glutamate: step 1/2. Functionally, catalyzes the transfer of a phosphate group to glutamate to form L-glutamate 5-phosphate. The sequence is that of Glutamate 5-kinase from Brucella anthropi (strain ATCC 49188 / DSM 6882 / CCUG 24695 / JCM 21032 / LMG 3331 / NBRC 15819 / NCTC 12168 / Alc 37) (Ochrobactrum anthropi).